Consider the following 443-residue polypeptide: Phosphoglucosamine mutase (443 aa).

S101 functions as the Phosphoserine intermediate in the catalytic mechanism. Residues S101, D239, D241, and D243 each coordinate Mg(2+). Position 101 is a phosphoserine (S101).

It belongs to the phosphohexose mutase family. Mg(2+) serves as cofactor. In terms of processing, activated by phosphorylation.

The enzyme catalyses alpha-D-glucosamine 1-phosphate = D-glucosamine 6-phosphate. Functionally, catalyzes the conversion of glucosamine-6-phosphate to glucosamine-1-phosphate. This chain is Phosphoglucosamine mutase, found in Francisella tularensis subsp. tularensis (strain FSC 198).